A 245-amino-acid chain; its full sequence is Protein DEHYDRATION-INDUCED 19 homolog 4 (245 aa).

The protein belongs to the Di19 family.

This is Protein DEHYDRATION-INDUCED 19 homolog 4 (DI19-4) from Oryza sativa subsp. japonica (Rice).